We begin with the raw amino-acid sequence, 278 residues long: Sulfur carrier protein FdhD (278 aa).

Residue Cys124 is the Cysteine persulfide intermediate of the active site.

Belongs to the FdhD family.

It localises to the cytoplasm. Its function is as follows. Required for formate dehydrogenase (FDH) activity. Acts as a sulfur carrier protein that transfers sulfur from IscS to the molybdenum cofactor prior to its insertion into FDH. In Burkholderia cenocepacia (strain ATCC BAA-245 / DSM 16553 / LMG 16656 / NCTC 13227 / J2315 / CF5610) (Burkholderia cepacia (strain J2315)), this protein is Sulfur carrier protein FdhD.